The sequence spans 339 residues: Ketol-acid reductoisomerase (NADP(+)) (339 aa).

The KARI N-terminal Rossmann domain maps to 1 to 182; sequence MRVYYDRDAD…GGGRAGIIET (182 aa). NADP(+) contacts are provided by residues 24–27, Arg48, Ser51, and 83–86; these read YGSQ and DEGQ. His108 is an active-site residue. Residue Gly134 participates in NADP(+) binding. Residues 183–328 form the KARI C-terminal knotted domain; sequence SFKEEVETDL…EKLRGMMPWI (146 aa). Asp191, Glu195, Glu227, and Glu231 together coordinate Mg(2+). Residue Ser252 coordinates substrate.

Belongs to the ketol-acid reductoisomerase family. It depends on Mg(2+) as a cofactor.

The enzyme catalyses (2R)-2,3-dihydroxy-3-methylbutanoate + NADP(+) = (2S)-2-acetolactate + NADPH + H(+). It catalyses the reaction (2R,3R)-2,3-dihydroxy-3-methylpentanoate + NADP(+) = (S)-2-ethyl-2-hydroxy-3-oxobutanoate + NADPH + H(+). It participates in amino-acid biosynthesis; L-isoleucine biosynthesis; L-isoleucine from 2-oxobutanoate: step 2/4. It functions in the pathway amino-acid biosynthesis; L-valine biosynthesis; L-valine from pyruvate: step 2/4. Functionally, involved in the biosynthesis of branched-chain amino acids (BCAA). Catalyzes an alkyl-migration followed by a ketol-acid reduction of (S)-2-acetolactate (S2AL) to yield (R)-2,3-dihydroxy-isovalerate. In the isomerase reaction, S2AL is rearranged via a Mg-dependent methyl migration to produce 3-hydroxy-3-methyl-2-ketobutyrate (HMKB). In the reductase reaction, this 2-ketoacid undergoes a metal-dependent reduction by NADPH to yield (R)-2,3-dihydroxy-isovalerate. This Gluconacetobacter diazotrophicus (strain ATCC 49037 / DSM 5601 / CCUG 37298 / CIP 103539 / LMG 7603 / PAl5) protein is Ketol-acid reductoisomerase (NADP(+)).